Here is a 123-residue protein sequence, read N- to C-terminus: Ribosome-binding factor A (123 aa).

This sequence belongs to the RbfA family. In terms of assembly, monomer. Binds 30S ribosomal subunits, but not 50S ribosomal subunits or 70S ribosomes.

It localises to the cytoplasm. Its function is as follows. One of several proteins that assist in the late maturation steps of the functional core of the 30S ribosomal subunit. Associates with free 30S ribosomal subunits (but not with 30S subunits that are part of 70S ribosomes or polysomes). Required for efficient processing of 16S rRNA. May interact with the 5'-terminal helix region of 16S rRNA. The protein is Ribosome-binding factor A of Syntrophus aciditrophicus (strain SB).